A 1480-amino-acid polypeptide reads, in one-letter code: MHTTTQATPQKSMVMTTTNGGGVDPPQWPEEEEDEDAAAGSSCRVTAANGHHHHHQQLVVSGELGGGGGGGGGGREKEDDELKRKWAAIERLPTADRLRLSLLSSTRGGGSSGDVSEGGGGGAASSELEVVDVRWLGAAERRAVVQRLVADVKHDHVRMLRKQRERMERVGVRPATVEVRWRDVCVEAECQVVSGKPLPTLWNAALSRFSLLAAKLGFSHHQSKVQILENVSGIIKPSRITLLLGPPGCGKTTLLKALAGRLNKSLKETGEIEYNGVKLDEFVPAKTSAYVSQYDLHVADMTVRETLDFSARFQGVGSRAEIMKAVIKREKEAGITPDPDIDAYMKAISMEGLQRSMQTDYIMKIMGLDKCADVKVGNAMRRGISGGEMKRLTTGEMIVGPCKVLLMDEISTGLDSSTTFQIVSCLQQLAHISEYTILVSLLQPAPETYDLFDDIIIMGEGKVVYHGPKNLIMTFFESCGFKCPERKGPADFLQEVLSKKDQQQYWSRSEQWYNFITVDQFCDKFKASQVGQSLAEDLSKLYEKSKANKNALSCSIYSLSKWHLLKACFDRELLLMKRNAFLHITKAVQLGLLAIITGTVFFRTHKNFDIVSANYYMGSLFYALILLMVNGIPELVMSISRLPVFYKHRDHYLYPGWAYAIPAFILKIPASLVAALSWTSISYYLIGYTPEAPRYFRQLLVLFLVHTGALSLYRCVGSYCQTIAVGPIAATMSLLVILLFGGFLIPRPSMPNWLKWGFWLSPLSYAEIGLTGNEFLAPRWLKITISGVTIGRRILIDRGLDFSVYFYWISVAALIGFILLYNIGFAIGLTIKQSPGASQAIISNDKIRICHGRDQEKSKDIKIGTRRMALPFTPLTISFQDVNYYVDTPPEMRKKGYMGRKLQLLRNITGAFQPGILSALMGVTGAGKTTLLDVLAGRKTGGVIEGDIRIGGYPKVQQTFSRISGYCEQNDVHSPQITVGESVAYSAWLRLPAEIDTKTRKEFVDEVLEIIELDEIRDALVGTPGVNGLSREQRKRLTIAVELVSNPSIVFMDEPTSGLDARAAAIAMRAVKNVAETGRTVVCTIHQPSIEIFEAFDELMLIKRGGELIYAGPLGQHSCKVIQYFQSIPGVPKIKDNYNPSTWMLEVTSTSMEAQLGVDFAQIYTGSSIRKDKDELIKGFSMPPPGTSDLHFPTRFPQKFLEQFKACLWKQFLSHWRTPSYNLVRIVFMAFSSIIFGVLYWQQGNIRHINDQQGLFTILGCMYGITIFTGINNSQSAMPFVAVERSVMYRERFAGMYSPWAYSFAQVAMEIPYVLMLALLFMLIAYPTIGYAWTAAKFCWFFYTMFCTLLYFVYFGMLIVSITPNLQVASIYASSFYMTQHLLSGFVMPPSQIPKWWIWLYYISPMSWTLNLLFTTQFGFEDNSNILVFGETKPIAAFVRDYFGFHRELLPLSAIILAAYPVLFAILYGYSISRFNFQKR.

The segment covering 1 to 18 (MHTTTQATPQKSMVMTTT) has biased composition (polar residues). Disordered stretches follow at residues 1–42 (MHTT…AGSS), 60–81 (VSGELGGGGGGGGGGREKEDDE), and 104–124 (SSTRGGGSSGDVSEGGGGGAA). 2 stretches are compositionally biased toward gly residues: residues 63–73 (ELGGGGGGGGG) and 107–123 (RGGGSSGDVSEGGGGGA). An ABC transporter 1 domain is found at 212 to 485 (LAAKLGFSHH…FESCGFKCPE (274 aa)). 245–252 (GPPGCGKT) lines the ATP pocket. Positions 563 to 775 (HLLKACFDRE…AEIGLTGNEF (213 aa)) constitute an ABC transmembrane type-2 1 domain. Transmembrane regions (helical) follow at residues 581-601 (FLHITKAVQLGLLAIITGTVF), 619-639 (SLFYALILLMVNGIPELVMSI), 656-676 (GWAYAIPAFILKIPASLVAAL), 699-719 (LLVLFLVHTGALSLYRCVGSY), 725-745 (VGPIAATMSLLVILLFGGFLI), and 811-831 (VAALIGFILLYNIGFAIGLTI). An ABC transporter 2 domain is found at 877–1129 (ISFQDVNYYV…KVIQYFQSIP (253 aa)). 922–929 (GVTGAGKT) lines the ATP pocket. In terms of domain architecture, ABC transmembrane type-2 2 spans 1202 to 1418 (EQFKACLWKQ…TLNLLFTTQF (217 aa)). 7 consecutive transmembrane segments (helical) span residues 1226 to 1246 (IVFMAFSSIIFGVLYWQQGNI), 1254 to 1274 (GLFTILGCMYGITIFTGINNS), 1311 to 1331 (IPYVLMLALLFMLIAYPTIGY), 1340 to 1360 (WFFYTMFCTLLYFVYFGMLIV), 1368 to 1388 (VASIYASSFYMTQHLLSGFVM), 1396 to 1416 (WWIWLYYISPMSWTLNLLFTT), and 1449 to 1469 (LLPLSAIILAAYPVLFAILYG).

Belongs to the ABC transporter superfamily. ABCG family. PDR (TC 3.A.1.205) subfamily.

The protein localises to the membrane. Functionally, may be a general defense protein. The sequence is that of ABC transporter G family member 49 from Oryza sativa subsp. japonica (Rice).